The chain runs to 215 residues: UPF0502 protein YceH (215 aa).

At K80 the chain carries N6-acetyllysine.

This sequence belongs to the UPF0502 family.

The protein is UPF0502 protein YceH of Escherichia fergusonii (strain ATCC 35469 / DSM 13698 / CCUG 18766 / IAM 14443 / JCM 21226 / LMG 7866 / NBRC 102419 / NCTC 12128 / CDC 0568-73).